A 27-amino-acid polypeptide reads, in one-letter code: uncharacterized protein (27 aa).

The protein resides in the mitochondrion. This is an uncharacterized protein from Emericella nidulans (Aspergillus nidulans).